The sequence spans 258 residues: Alcohol dehydrogenase 2 (258 aa).

9-33 (IFVGGLGFIGYEACKQLMAKNMASF) contributes to the NAD(+) binding site. Serine 137 contacts substrate. Residue tyrosine 150 is the Proton acceptor of the active site.

This sequence belongs to the short-chain dehydrogenases/reductases (SDR) family. In terms of assembly, homodimer.

It catalyses the reaction a primary alcohol + NAD(+) = an aldehyde + NADH + H(+). The catalysed reaction is a secondary alcohol + NAD(+) = a ketone + NADH + H(+). The polypeptide is Alcohol dehydrogenase 2 (ADH2) (Ceratitis capitata (Mediterranean fruit fly)).